The primary structure comprises 151 residues: 3-hydroxyacyl-[acyl-carrier-protein] dehydratase FabZ (151 aa).

The active site involves H49.

Belongs to the thioester dehydratase family. FabZ subfamily.

It localises to the cytoplasm. The catalysed reaction is a (3R)-hydroxyacyl-[ACP] = a (2E)-enoyl-[ACP] + H2O. Its function is as follows. Involved in unsaturated fatty acids biosynthesis. Catalyzes the dehydration of short chain beta-hydroxyacyl-ACPs and long chain saturated and unsaturated beta-hydroxyacyl-ACPs. In Bordetella bronchiseptica (strain ATCC BAA-588 / NCTC 13252 / RB50) (Alcaligenes bronchisepticus), this protein is 3-hydroxyacyl-[acyl-carrier-protein] dehydratase FabZ.